We begin with the raw amino-acid sequence, 310 residues long: Protein CUP-SHAPED COTYLEDON 1 (310 aa).

One can recognise an NAC domain in the interval 20–172 (MPPGFRFHPT…EWVLCKVCLK (153 aa)). The DNA-binding element occupies 119-178 (LGMKKTLVFYKGRAPKGEKSCWVMHEYRLDGKFSYHYISSSAKDEWVLCKVCLKSGVVSR). 2 involved in transactivation activity regions span residues 179–210 (ETNL…NTFA) and 306–310 (WPFTL).

In terms of tissue distribution, expressed in inflorescence stems, rosette leaves, aerial parts of seedlings, flowers, floral buds and roots.

The protein resides in the nucleus. Functionally, transcription activator of STM and KNAT6. Involved in molecular mechanisms regulating shoot apical meristem (SAM) formation during embryogenesis and organ separation. Required for the fusion of septa of gynoecia along the length of the ovaries. Activates the shoot formation in callus in a STM-dependent manner. Seems to act as an inhibitor of cell division. This chain is Protein CUP-SHAPED COTYLEDON 1 (NAC054), found in Arabidopsis thaliana (Mouse-ear cress).